The sequence spans 201 residues: MPPRPRFDRRAPVRELPNINERIKYPKLRVVDADGTQLGIISREEALDVAQDRELDLVLVSEKADPPVCRIMNYGKFKFEQEKKAKEAKKKSHQTEVKEVKMRYKIDEHDYQVRIGQATRFLKAGDKVKCTVIFRGREIQHTNLAESLLARMAKDLEEPAEVQQAPKREGRNMIMFLTPRKTPLIKKEQELEEASKAKRTI.

Belongs to the IF-3 family. Monomer.

Its subcellular location is the cytoplasm. In terms of biological role, IF-3 binds to the 30S ribosomal subunit and shifts the equilibrium between 70S ribosomes and their 50S and 30S subunits in favor of the free subunits, thus enhancing the availability of 30S subunits on which protein synthesis initiation begins. This is Translation initiation factor IF-3 from Prochlorococcus marinus (strain SARG / CCMP1375 / SS120).